A 200-amino-acid chain; its full sequence is BmK-YA precursor (200 aa).

The signal sequence occupies residues 1–23 (MIFHQFYSILILCLIFPNQVVQS). The propeptide occupies 24–34 (DKERQDWIPSD). The segment at 30 to 200 (WIPSDYGGYM…GYMNPAGRSD (171 aa)) is disordered. The residue at position 42 (A42) is an Alanine amide. Positions 45–100 (SDEERQDWIPSDYGGHMNPAGRSDEERQDWIPSDYGGHMNPAGRSNEERQDWIPSD) are excised as a propeptide. At A108 the chain carries Alanine amide. A propeptide spanning residues 111-144 (SDEERQDWIPSDYGGHMNPAGRSNEERQDWIPSD) is cleaved from the precursor. A152 carries the alanine amide modification. Positions 155–188 (SDEERQDWIPSDYGGHMNPAGRSDEERQDWIPSD) are excised as a propeptide. A196 is modified (alanine amide). Positions 199–200 (SD) are excised as a propeptide.

Venom gland.

Its subcellular location is the secreted. In terms of biological role, synthetic BmK-YA activates human opioid receptors in vitro, with highest activity on the delta-type/OPRD1 receptor (EC(50)=2.5 uM) and lower activity on mu-type/OPRM1 and kappa-type/OPRK1 receptors (EC(50)=17 uM and 30 uM, respectively). The chain is BmK-YA precursor from Olivierus martensii (Manchurian scorpion).